Consider the following 412-residue polypeptide: Small ribosomal subunit protein mL103 (rPPR7) (412 aa).

The N-terminal 14 residues, 1-14 (MASSRISLRLVRRF), are a transit peptide targeting the mitochondrion. Polar residues predominate over residues 21 to 37 (GTTTAPSSGKISVSKAK). Residues 21–43 (GTTTAPSSGKISVSKAKSTLRKE) are disordered. PPR repeat units lie at residues 101–135 (EEPFYSTLIRSYGQASMFNHAMRTFEQMDQYGTPR), 136–166 (SAVSFNALLNACLHSKNFDKVPQLFDEIPQR), 173–207 (DKISYGILIKSYCDSGTPEKAIEIMRQMQGKGMEV), 208–242 (TTIAFTTILSSLYKKGELEVADNLWNEMVKKGCEL), 243–276 (DNAAYNVRIMSAQKESPERVKELIEEMSSMGLKP), 277–311 (DTISYNYLMTAYCERGMLDEAKKVYEGLEGNNCAP), 312–346 (NAATFRTLIFHLCYSRLYEQGYAIFKKSVYMHKIP), and 347–377 (DFNTLKHLVVGLVENKKRDDAKGLIRTVKKK).

Belongs to the PPR family. P subfamily. As to quaternary structure, component of the mitochondrial ribosome small subunit.

Its subcellular location is the mitochondrion. The sequence is that of Small ribosomal subunit protein mL103 (rPPR7) from Arabidopsis thaliana (Mouse-ear cress).